Consider the following 662-residue polypeptide: Methyl-accepting chemotaxis protein TlpB (662 aa).

The Cytoplasmic segment spans residues 1–16 (MGKFIQWIKQPSISKP). The helical transmembrane segment at 17–37 (LIAAFLAVLILPVGVLAYFSY) threads the bilayer. Topologically, residues 38-281 (QSAWNALDRE…LQDASSPVLN (244 aa)) are extracellular. Residues 153–228 (SEPYTDEATG…KPGTTGSGDW (76 aa)) enclose the Cache domain. The chain crosses the membrane as a helical span at residues 282-302 (TAVIILCVSIVIGGILILYII). Residues 303 to 355 (RAITKPLRKLVSTSAKISSGDLTEVIDIHSKNEFGQLGESFNEMSASLRSVIG) form the HAMP domain. Topologically, residues 303–662 (RAITKPLRKL…DITKKFKIES (360 aa)) are cytoplasmic. A Glutamate methyl ester (Glu) modification is found at E370. One can recognise a Methyl-accepting transducer domain in the interval 374 to 610 (SAAQTSKATE…EVSSAVEDIS (237 aa)). Q594 carries the post-translational modification Glutamate methyl ester (Gln). Glutamate methyl ester (Glu) occurs at positions 629 and 636.

The protein belongs to the methyl-accepting chemotaxis (MCP) protein family.

The protein resides in the cell membrane. Its function is as follows. Chemotactic-signal transducers respond to changes in the concentration of attractants and repellents in the environment, transduce a signal from the outside to the inside of the cell, and facilitate sensory adaptation through the variation of the level of methylation. All amino acids serve as attractants in B.subtilis, they appear to cause an increase in the turnover methyl groups, leading to methylation of an unidentified acceptor, while repellents have been shown to cause a decrease in methyl group turnover. The methyl groups are added by a methyltransferase and removed by a methylesterase. The sequence is that of Methyl-accepting chemotaxis protein TlpB (tlpB) from Bacillus subtilis (strain 168).